Consider the following 521-residue polypeptide: Glucomannan 4-beta-mannosyltransferase 1 (521 aa).

The chain crosses the membrane as a helical span at residues 22-42; that stretch reads VIVPLLRLAVAVCLTMSVLLF. The active site involves Asp-123. Asp-182 and Asp-184 together coordinate substrate. Residue Asp-276 is part of the active site. A run of 4 helical transmembrane segments spans residues 355–375, 391–411, 471–491, and 495–515; these read IIAHIVTFAFYCLIIPATIFV, IITLLNSVGTPRSFHLLFFWI, VTELGVAAFLFSCGWYDLAFG, and FFIYLFFQGAAFFIVGIGYVG.

Belongs to the glycosyltransferase 2 family. Plant cellulose synthase-like A subfamily.

It is found in the golgi apparatus membrane. The enzyme catalyses GDP-mannose + (glucomannan)n = GDP + (glucomannan)n+1.. In terms of biological role, possesses glucomannan synthase and mannan synthase activities in vitro. Mannan synthase consists of a 4-beta-mannosyltransferase activity on mannan using GDP-mannose. The beta-1,4-mannan product is the backbone for galactomannan synthesis by galactomannan galactosyltransferase. Galactomannan is a noncellulosic polysaccharides of plant cell wall. This is Glucomannan 4-beta-mannosyltransferase 1 from Oryza sativa subsp. japonica (Rice).